We begin with the raw amino-acid sequence, 369 residues long: Tyrosinase-like protein orsC (369 aa).

The signal sequence occupies residues 1–23; sequence MLAFNPLVTALAALIFLFCQANA. Cu cation-binding residues include H112 and H121. N165, N179, N253, and N272 each carry an N-linked (GlcNAc...) asparagine glycan. Residue H315 coordinates Cu cation.

Its pathway is secondary metabolite biosynthesis. Functionally, tyrosinase-like protein; part of the gene cluster that mediates the biosynthesis of orsellinic acid, as well as of the cathepsin K inhibitors F9775 A and F9775 B. The non-reducing polyketide synthase orsA produces orsellinic acid by condensing acetyl-CoA with 3 malonyl-CoA units. Further modifications by the decarboxylase orsB and the tyrosinase-like protein orsC lead to the production of F9775 A and F9775 B. The functions of orsD and orsE remain unclear since only orsB and orsC are required to convert orsellinic acid into F9775 A and F9775 B. The sequence is that of Tyrosinase-like protein orsC from Emericella nidulans (strain FGSC A4 / ATCC 38163 / CBS 112.46 / NRRL 194 / M139) (Aspergillus nidulans).